A 597-amino-acid chain; its full sequence is Membrane protein insertase YidC (597 aa).

A helical membrane pass occupies residues 8–28 (YFVAIALSVLILIAWQFFYVS). The interval 38–75 (AEKAQQAQSQPGTQQAAPGQAAPGQALPGGAIPSAAES) is disordered. Residues 41–70 (AQQAQSQPGTQQAAPGQAAPGQALPGGAIP) show a composition bias toward low complexity. 4 consecutive transmembrane segments (helical) span residues 372–392 (LFGN…LIFF), 446–466 (WPIL…YVTI), 491–511 (LFGL…WPIV), and 535–555 (FTWM…GLVI).

Belongs to the OXA1/ALB3/YidC family. Type 1 subfamily. Interacts with the Sec translocase complex via SecD. Specifically interacts with transmembrane segments of nascent integral membrane proteins during membrane integration.

The protein localises to the cell inner membrane. In terms of biological role, required for the insertion and/or proper folding and/or complex formation of integral membrane proteins into the membrane. Involved in integration of membrane proteins that insert both dependently and independently of the Sec translocase complex, as well as at least some lipoproteins. Aids folding of multispanning membrane proteins. In Sinorhizobium medicae (strain WSM419) (Ensifer medicae), this protein is Membrane protein insertase YidC.